We begin with the raw amino-acid sequence, 229 residues long: Large ribosomal subunit protein uL1 (229 aa).

The protein belongs to the universal ribosomal protein uL1 family. As to quaternary structure, part of the 50S ribosomal subunit.

In terms of biological role, binds directly to 23S rRNA. The L1 stalk is quite mobile in the ribosome, and is involved in E site tRNA release. Its function is as follows. Protein L1 is also a translational repressor protein, it controls the translation of the L11 operon by binding to its mRNA. The protein is Large ribosomal subunit protein uL1 of Clostridium kluyveri (strain ATCC 8527 / DSM 555 / NBRC 12016 / NCIMB 10680 / K1).